The primary structure comprises 82 residues: ATP synthase subunit c (82 aa).

2 helical membrane-spanning segments follow: residues Ile-5 to Gly-25 and Leu-57 to Ala-77.

This sequence belongs to the ATPase C chain family. As to quaternary structure, F-type ATPases have 2 components, F(1) - the catalytic core - and F(0) - the membrane proton channel. F(1) has five subunits: alpha(3), beta(3), gamma(1), delta(1), epsilon(1). F(0) has four main subunits: a(1), b(1), b'(1) and c(10-14). The alpha and beta chains form an alternating ring which encloses part of the gamma chain. F(1) is attached to F(0) by a central stalk formed by the gamma and epsilon chains, while a peripheral stalk is formed by the delta, b and b' chains.

The protein resides in the cellular thylakoid membrane. Its function is as follows. F(1)F(0) ATP synthase produces ATP from ADP in the presence of a proton or sodium gradient. F-type ATPases consist of two structural domains, F(1) containing the extramembraneous catalytic core and F(0) containing the membrane proton channel, linked together by a central stalk and a peripheral stalk. During catalysis, ATP synthesis in the catalytic domain of F(1) is coupled via a rotary mechanism of the central stalk subunits to proton translocation. In terms of biological role, key component of the F(0) channel; it plays a direct role in translocation across the membrane. A homomeric c-ring of between 10-14 subunits forms the central stalk rotor element with the F(1) delta and epsilon subunits. This chain is ATP synthase subunit c, found in Cyanothece sp. (strain PCC 7425 / ATCC 29141).